Reading from the N-terminus, the 195-residue chain is Probable GTP-binding protein EngB (195 aa).

The EngB-type G domain maps to 24 to 195; the sequence is GLKEVALAGR…MIFNAIEKYL (172 aa). GTP contacts are provided by residues 32–39, 59–63, 77–80, 144–147, and 176–178; these read GRSNVGKS, GKTQT, DVPG, TKED, and YTA. Residues Ser39 and Thr61 each contribute to the Mg(2+) site.

Belongs to the TRAFAC class TrmE-Era-EngA-EngB-Septin-like GTPase superfamily. EngB GTPase family. Requires Mg(2+) as cofactor.

Its function is as follows. Necessary for normal cell division and for the maintenance of normal septation. The chain is Probable GTP-binding protein EngB from Macrococcus caseolyticus (strain JCSC5402) (Macrococcoides caseolyticum).